Consider the following 1671-residue polypeptide: DNA polymerase (1671 aa).

The segment at 135 to 326 (LKMLAFDIET…KVTYELGKEF (192 aa)) is 3'-5' exonuclease. Positions 524–665 (LAGILLAEGT…VSKLLSQLGI (142 aa)) constitute a DOD-type homing endonuclease 1 domain. An intrachain disulfide couples cysteine 788 to cysteine 802. Residues 1132-1265 (LLGYYVSEGY…LVLLLNSVGV (134 aa)) form the DOD-type homing endonuclease 2 domain. An intrachain disulfide couples cysteine 1403 to cysteine 1406.

The protein belongs to the DNA polymerase type-B family. Post-translationally, undergoes a protein self splicing that involves a post-translational excision of the intervening region (intein) followed by peptide ligation.

The catalysed reaction is DNA(n) + a 2'-deoxyribonucleoside 5'-triphosphate = DNA(n+1) + diphosphate. In terms of biological role, has high processivity, a high polymerization rate and high fidelity. In addition to polymerase activity, also exhibits 3' to 5' exonuclease activity. Its function is as follows. Intein encoded endonucleases are thought to mediate intein mobility by site-specific recombination initiated by endonuclease cleavage at the 'homing site' in genes that lack the intein. Upon expression in E.coli PI-PkoI recognizes the minimal sequence 5'-GATTTTAGATCCCTGTACC-3' and cuts after T-10. PI-PkoII recognizes the minimal sequence 5'-CAGCTACTACGGTTAC-3' and cuts after C-10. Given the high intracellular K(+) content (&gt;0.5 M), PI-PkoII is probably more active than PI-PkoI in vivo. In Thermococcus kodakarensis (strain ATCC BAA-918 / JCM 12380 / KOD1) (Pyrococcus kodakaraensis (strain KOD1)), this protein is DNA polymerase (pol).